Consider the following 33-residue polypeptide: Suppressor protein HFN40 (33 aa).

Its function is as follows. Suppresses expansion of husk leaf blades. The polypeptide is Suppressor protein HFN40 (Zea mays (Maize)).